Reading from the N-terminus, the 219-residue chain is PKHD-type hydroxylase AM1_3707 (219 aa).

Positions 78–172 (SIHTLLFSRY…RLVAVGWVQS (95 aa)) constitute a Fe2OG dioxygenase domain. Residues H96, D98, and H153 each coordinate Fe cation. R163 serves as a coordination point for 2-oxoglutarate.

Fe(2+) serves as cofactor. L-ascorbate is required as a cofactor.

The protein is PKHD-type hydroxylase AM1_3707 of Acaryochloris marina (strain MBIC 11017).